The primary structure comprises 495 residues: MKTDRLLINASPETCTKGDAEMDTMDTIDRMTSVKVLAEGKVLSNFEEPGLMRCGYHDAKNWVRRLSSETIVGEDTSNLYPFYVDTAYDVRRLRKDLINAKVDLQVENLIIICNINDISTVFLMREVVEWILRNFHSITVYVQDIFKKSTQFAVGDLCKDSNCSKNRVKYWSKEFVKKHDSFFDLMITLGGDGTVLFASSIFTKDVPPIVPFALGSLGFLTNFEFQNFKETLKHILTDEVRINLRMRLQCKLYRRNKPEIDAATGRKICYIDFISEHHVLNEVTIDRGPAPCLSLLELYGNDSLMTKVQGDGLIVATPTGSTAYSLSAGGSLISPSVNAIAVTPICPHTLSFRPIILPDSMELKVRVDMNSRGTSWVNFDGKDRVELKQGDYVVITASPYSVPTIESSASEFFESISKNLNWNDREEQKPFAHILSPKNQEKYRLDSSKNGNDTISNPLESSCISSDAQDEERKSVTETETEIVVERTRQAHFAI.

Residues 442–480 (KYRLDSSKNGNDTISNPLESSCISSDAQDEERKSVTETE) are disordered. The segment covering 448–467 (SKNGNDTISNPLESSCISSD) has biased composition (polar residues).

The protein belongs to the NAD kinase family. In terms of assembly, homooctamer. Mg(2+) is required as a cofactor. The cofactor is Mn(2+). Requires Co(2+) as cofactor. Ca(2+) serves as cofactor.

It catalyses the reaction NADH + ATP = ADP + NADPH + H(+). In terms of biological role, ATP-NADH kinase with a low phosphorylation activity of both NADH and NAD(+) to produce NADP and NADPH by using ATP. UTR1 is responsible for essentially all of the NAD/NADH kinase activity resident in the cytoplasm, whereas POS5 is responsible for all mitochondrial NAD/NADH kinase activity and consequent mitochondrial genome maintenance. YEF1 can substitute for UTR1 when overexpressed. The chain is ATP-NADH kinase YEF1 (YEF1) from Saccharomyces cerevisiae (strain ATCC 204508 / S288c) (Baker's yeast).